The sequence spans 123 residues: Small ribosomal subunit protein uS13 (123 aa).

The segment at 93-123 is disordered; the sequence is HRKGLPVRGQNTKNNARTRKGPAKAIAGKKK. Over residues 108–123 the composition is skewed to basic residues; sequence ARTRKGPAKAIAGKKK.

Belongs to the universal ribosomal protein uS13 family. In terms of assembly, part of the 30S ribosomal subunit. Forms a loose heterodimer with protein S19. Forms two bridges to the 50S subunit in the 70S ribosome.

Its function is as follows. Located at the top of the head of the 30S subunit, it contacts several helices of the 16S rRNA. In the 70S ribosome it contacts the 23S rRNA (bridge B1a) and protein L5 of the 50S subunit (bridge B1b), connecting the 2 subunits; these bridges are implicated in subunit movement. Contacts the tRNAs in the A and P-sites. This is Small ribosomal subunit protein uS13 from Leuconostoc mesenteroides subsp. mesenteroides (strain ATCC 8293 / DSM 20343 / BCRC 11652 / CCM 1803 / JCM 6124 / NCDO 523 / NBRC 100496 / NCIMB 8023 / NCTC 12954 / NRRL B-1118 / 37Y).